The sequence spans 349 residues: KH domain-containing, RNA-binding, signal transduction-associated protein 2 (349 aa).

In terms of domain architecture, KH spans 65–135; that stretch reads LIPVKQYPKF…HLSDELHVLI (71 aa). Disordered regions lie at residues 181–263 and 321–349; these read SEES…PPPA and EWAT…YGRY. Residues 218 to 231 show a composition bias toward low complexity; that stretch reads RGVLTPRGTTVTRG. Arg230 and Arg240 each carry omega-N-methylarginine. Residues 340-349 are compositionally biased toward basic and acidic residues; the sequence is GYREHPYGRY.

The protein belongs to the KHDRBS family. As to quaternary structure, self-associates to form homooligomers. Interacts with KHDRBS1/SAM68; heterooligomer formation of KHDRBS family proteins may modulate RNA substrate specificity. Interacts with RBMX, SAFB, SFRS9 and YTHDC1. Interacts with FYN and PLCG1 (via SH3 domain). Interacts (phosphorylated) with FYN, GRB2, PLCG1 and RASA1 (via SH2 domain). In terms of processing, methylated. Tyrosine phosphorylated by FYN, PTK6 and SRC. Tyrosine phosphorylated by SRC during mitosis. As to expression, expressed in heart, skin, brain, colon, spleen, kidney, cervix and testis. In adult cerebellum expressed predominantly in Purkinje cells and in the hippocampus is abundantly expressed in glutamatergic dentate granule cells and in specific inhibitory Schaffer collateral-associated and path-associated interneurons; expression is restricted to neuronal subpopulations largely non-overlapping with expression of KHDRBS3/SLM-2 (at protein level).

Its subcellular location is the nucleus. Functionally, RNA-binding protein that plays a role in the regulation of alternative splicing and influences mRNA splice site selection and exon inclusion. Binds both poly(A) and poly(U) homopolymers. Phosphorylation by PTK6 inhibits its RNA-binding ability. Induces an increased concentration-dependent incorporation of exon in CD44 pre-mRNA by direct binding to purine-rich exonic enhancer. Can regulate alternative splicing of neurexins NRXN1-3 in the laminin G-like domain 6 containing the evolutionary conserved neurexin alternative spliced segment 4 (AS4) involved in neurexin selective targeting to postsynaptic partners. Regulates cell-type specific alternative splicing of NRXN1 at AS4 and acts synergystically with SAM68 in exon skipping. In contrast acts antagonistically with SAM68 in NRXN3 exon skipping at AS4. Its phosphorylation by FYN inhibits its ability to regulate splice site selection. May function as an adapter protein for Src kinases during mitosis. This is KH domain-containing, RNA-binding, signal transduction-associated protein 2 (Khdrbs2) from Mus musculus (Mouse).